We begin with the raw amino-acid sequence, 487 residues long: Probable glutamate receptor (487 aa).

Residues 1 to 23 form the signal peptide; that stretch reads MDKGQHFVFFVLTTVLLLRESSH. Over 24–169 the chain is Extracellular; it reads AGAMRNDAAA…FFHFLAPFSK (146 aa). N-linked (GlcNAc...) asparagine glycosylation occurs at Asn-104. The helical transmembrane segment at 170–190 threads the bilayer; that stretch reads ETWTGLLFAYILTCFCLFLVA. Residues 191–235 are Cytoplasmic-facing; it reads RLSPCEWNEPKNEENHFTFLNSLWFGAGALALQGVTPRPKALSVR. The chain crosses the membrane as a helical span at residues 236 to 256; it reads VIAAIWWLFTIALLAAYIANF. The Extracellular portion of the chain corresponds to 257–419; that stretch reads TALLSSGSEQ…ERWSPLQPQA (163 aa). Residues 420–440 form a helical membrane-spanning segment; the sequence is LGGLFLTLAIGLALGVIAAVV. At 441–487 the chain is on the cytoplasmic side; the sequence is ELSNKSRHAAGHVKKSCCSIFTEEMCTRLRIKENTRQSQETSGRANA.

The protein belongs to the glutamate-gated ion channel (TC 1.A.10.1) family.

Its subcellular location is the cell membrane. The protein localises to the postsynaptic cell membrane. Its function is as follows. Receptor for glutamate. L-glutamate acts as an excitatory neurotransmitter at many synapses in the central nervous system. The postsynaptic actions of Glu are mediated by a variety of receptors that are named according to their selective agonists. The chain is Probable glutamate receptor (KBP) from Anas platyrhynchos (Mallard).